Consider the following 103-residue polypeptide: Acylphosphatase-2 (103 aa).

Ser2 is subject to N-acetylserine. The Acylphosphatase-like domain maps to 13–103 (SVDYEVFGRV…LDFSGFSTRY (91 aa)). Cys26 carries the post-translational modification S-glutathionyl cysteine; alternate. Residues Arg28 and Asn46 contribute to the active site.

Belongs to the acylphosphatase family. As to quaternary structure, monomer (TU1) or homodimer (TU3) in absence of reducing factors; disulfide linked.

It catalyses the reaction an acyl phosphate + H2O = a carboxylate + phosphate + H(+). Its function is as follows. Its physiological role is not yet clear. The chain is Acylphosphatase-2 (ACYP2) from Meleagris gallopavo (Wild turkey).